The sequence spans 363 residues: Holliday junction branch migration complex subunit RuvB (363 aa).

The tract at residues 1 to 44 (MAIKRNQGHGLPPKRDPALGRDALTTSQALPEDQEQSANEDRIR) is disordered. The large ATPase domain (RuvB-L) stretch occupies residues 13–204 (PKRDPALGRD…FGLIQRLRFY (192 aa)). The ATP site is built by isoleucine 43, arginine 44, glycine 85, lysine 88, threonine 89, threonine 90, arginine 194, tyrosine 204, and arginine 241. Position 89 (threonine 89) interacts with Mg(2+). The small ATPAse domain (RuvB-S) stretch occupies residues 205-275 (EVDELIAIVH…VAATALDLYN (71 aa)). A head domain (RuvB-H) region spans residues 278-363 (ALGLDWTDRL…EQSTQLDFLP (86 aa)). DNA-binding residues include arginine 333 and arginine 338.

Belongs to the RuvB family. Homohexamer. Forms an RuvA(8)-RuvB(12)-Holliday junction (HJ) complex. HJ DNA is sandwiched between 2 RuvA tetramers; dsDNA enters through RuvA and exits via RuvB. An RuvB hexamer assembles on each DNA strand where it exits the tetramer. Each RuvB hexamer is contacted by two RuvA subunits (via domain III) on 2 adjacent RuvB subunits; this complex drives branch migration. In the full resolvosome a probable DNA-RuvA(4)-RuvB(12)-RuvC(2) complex forms which resolves the HJ.

It is found in the cytoplasm. The enzyme catalyses ATP + H2O = ADP + phosphate + H(+). Its function is as follows. The RuvA-RuvB-RuvC complex processes Holliday junction (HJ) DNA during genetic recombination and DNA repair, while the RuvA-RuvB complex plays an important role in the rescue of blocked DNA replication forks via replication fork reversal (RFR). RuvA specifically binds to HJ cruciform DNA, conferring on it an open structure. The RuvB hexamer acts as an ATP-dependent pump, pulling dsDNA into and through the RuvAB complex. RuvB forms 2 homohexamers on either side of HJ DNA bound by 1 or 2 RuvA tetramers; 4 subunits per hexamer contact DNA at a time. Coordinated motions by a converter formed by DNA-disengaged RuvB subunits stimulates ATP hydrolysis and nucleotide exchange. Immobilization of the converter enables RuvB to convert the ATP-contained energy into a lever motion, pulling 2 nucleotides of DNA out of the RuvA tetramer per ATP hydrolyzed, thus driving DNA branch migration. The RuvB motors rotate together with the DNA substrate, which together with the progressing nucleotide cycle form the mechanistic basis for DNA recombination by continuous HJ branch migration. Branch migration allows RuvC to scan DNA until it finds its consensus sequence, where it cleaves and resolves cruciform DNA. The polypeptide is Holliday junction branch migration complex subunit RuvB (Picosynechococcus sp. (strain ATCC 27264 / PCC 7002 / PR-6) (Agmenellum quadruplicatum)).